Here is a 265-residue protein sequence, read N- to C-terminus: Phosphate import ATP-binding protein PstB 2 (265 aa).

The ABC transporter domain occupies Phe-13–Val-260. ATP is bound at residue Gly-45 to Ser-52.

Belongs to the ABC transporter superfamily. Phosphate importer (TC 3.A.1.7) family. As to quaternary structure, the complex is composed of two ATP-binding proteins (PstB), two transmembrane proteins (PstC and PstA) and a solute-binding protein (PstS).

The protein resides in the cell inner membrane. It catalyses the reaction phosphate(out) + ATP + H2O = ADP + 2 phosphate(in) + H(+). Part of the ABC transporter complex PstSACB involved in phosphate import. Responsible for energy coupling to the transport system. The protein is Phosphate import ATP-binding protein PstB 2 of Synechococcus sp. (strain JA-3-3Ab) (Cyanobacteria bacterium Yellowstone A-Prime).